The chain runs to 63 residues: Metallothionein-1 (63 aa).

2 repeats span residues 23-30 (CGDKCECK) and 56-63 (CGDKCECK).

Belongs to the metallothionein superfamily. Type 9 family.

Functionally, the metallothioneins are involved in the cellular sequestration of toxic metal ions. The protein is Metallothionein-1 (MT-I) of Candida glabrata (strain ATCC 2001 / BCRC 20586 / JCM 3761 / NBRC 0622 / NRRL Y-65 / CBS 138) (Yeast).